Here is a 97-residue protein sequence, read N- to C-terminus: Co-chaperonin GroES (97 aa).

The protein belongs to the GroES chaperonin family. As to quaternary structure, heptamer of 7 subunits arranged in a ring. Interacts with the chaperonin GroEL.

The protein localises to the cytoplasm. In terms of biological role, together with the chaperonin GroEL, plays an essential role in assisting protein folding. The GroEL-GroES system forms a nano-cage that allows encapsulation of the non-native substrate proteins and provides a physical environment optimized to promote and accelerate protein folding. GroES binds to the apical surface of the GroEL ring, thereby capping the opening of the GroEL channel. The sequence is that of Co-chaperonin GroES from Pseudomonas putida (strain W619).